The chain runs to 382 residues: Na(+)/H(+) antiporter NhaA 2 (382 aa).

11 helical membrane passes run 7-27 (MALS…LALL), 58-78 (LDLW…GLEL), 94-114 (SLPI…FAAI), 124-144 (GWAI…MLLG), 153-173 (LFLL…IALF), 178-198 (LSAL…LLNY), 199-219 (YHIT…IAML), 255-275 (NPWV…GIDI), 291-311 (IILG…FIAI), 327-347 (FYGI…IDGL), and 361-381 (LAIL…LKIV).

It belongs to the NhaA Na(+)/H(+) (TC 2.A.33) antiporter family.

The protein localises to the cell inner membrane. It carries out the reaction Na(+)(in) + 2 H(+)(out) = Na(+)(out) + 2 H(+)(in). Functionally, na(+)/H(+) antiporter that extrudes sodium in exchange for external protons. This chain is Na(+)/H(+) antiporter NhaA 2, found in Campylobacter jejuni subsp. doylei (strain ATCC BAA-1458 / RM4099 / 269.97).